The sequence spans 145 residues: LIM domain only protein 3 (145 aa).

LIM zinc-binding domains follow at residues K11–T73 and G75–K137.

This chain is LIM domain only protein 3 (Lmo3), found in Rattus norvegicus (Rat).